The following is a 616-amino-acid chain: Chaperone protein DnaK (616 aa).

The residue at position 175 (T175) is a Phosphothreonine; by autocatalysis. The interval 579-605 is disordered; it reads GGDPSQAGGFDPNAAGGAQQAPHDDNV.

Belongs to the heat shock protein 70 family.

Functionally, acts as a chaperone. The sequence is that of Chaperone protein DnaK from Clostridium botulinum (strain Alaska E43 / Type E3).